Reading from the N-terminus, the 296-residue chain is Glycine--tRNA ligase alpha subunit (296 aa).

It belongs to the class-II aminoacyl-tRNA synthetase family. As to quaternary structure, tetramer of two alpha and two beta subunits.

Its subcellular location is the cytoplasm. The catalysed reaction is tRNA(Gly) + glycine + ATP = glycyl-tRNA(Gly) + AMP + diphosphate. The protein is Glycine--tRNA ligase alpha subunit of Synechococcus sp. (strain WH7803).